A 262-amino-acid chain; its full sequence is Phosphonates import ATP-binding protein PhnC (262 aa).

Residues 5-253 (IRVEKLAKTF…RFDHLYRSIN (249 aa)) form the ABC transporter domain. 37-44 (GPSGSGKS) provides a ligand contact to ATP.

Belongs to the ABC transporter superfamily. Phosphonates importer (TC 3.A.1.9.1) family. As to quaternary structure, the complex is composed of two ATP-binding proteins (PhnC), two transmembrane proteins (PhnE) and a solute-binding protein (PhnD).

Its subcellular location is the cell inner membrane. It carries out the reaction phosphonate(out) + ATP + H2O = phosphonate(in) + ADP + phosphate + H(+). Functionally, part of the ABC transporter complex PhnCDE involved in phosphonates import. Responsible for energy coupling to the transport system. This is Phosphonates import ATP-binding protein PhnC from Shigella dysenteriae serotype 1 (strain Sd197).